Reading from the N-terminus, the 128-residue chain is Small ribosomal subunit protein uS9 (128 aa).

The tract at residues D105–R128 is disordered. Basic residues predominate over residues P114–R128.

Belongs to the universal ribosomal protein uS9 family.

The sequence is that of Small ribosomal subunit protein uS9 from Bacteroides thetaiotaomicron (strain ATCC 29148 / DSM 2079 / JCM 5827 / CCUG 10774 / NCTC 10582 / VPI-5482 / E50).